The chain runs to 180 residues: UPF0227 protein CKO_01948 (180 aa).

The protein belongs to the UPF0227 family.

The sequence is that of UPF0227 protein CKO_01948 from Citrobacter koseri (strain ATCC BAA-895 / CDC 4225-83 / SGSC4696).